We begin with the raw amino-acid sequence, 162 residues long: Disulfide bond formation protein B (162 aa).

Over 1 to 4 (MRII) the chain is Cytoplasmic. The helical transmembrane segment at 5-21 (FLLIFLACAGLIGYALY) threads the bilayer. At 22 to 39 (LQLMDGLLPCPLCIFQRI) the chain is on the periplasmic side. Residues Cys-31 and Cys-34 are joined by a disulfide bond. Residues 40-56 (AYWLIGITALFTFIHNP) traverse the membrane as a helical segment. At 57–62 (QSLGQH) the chain is on the cytoplasmic side. Residues 63-80 (IYYGLIILFSLAGAIVAG) form a helical membrane-spanning segment. At 81 to 136 (RQAWLIRFPEAFECGISPEEAFLNGLPLAQWWPNMFEANGDCNDGTWQFLSLTLPD) the chain is on the periplasmic side. The cysteines at positions 94 and 122 are disulfide-linked. Residues 137 to 155 (WSLLIFAAFGIIAGLLWHK) form a helical membrane-spanning segment. Over 156–162 (KYNSINQ) the chain is Cytoplasmic.

It belongs to the DsbB family.

The protein localises to the cell inner membrane. In terms of biological role, required for disulfide bond formation in some periplasmic proteins. Acts by oxidizing the DsbA protein. In Nitrosomonas eutropha (strain DSM 101675 / C91 / Nm57), this protein is Disulfide bond formation protein B.